The sequence spans 598 residues: Elongation factor 4 (598 aa).

In terms of domain architecture, tr-type G spans Asn-2 to Gln-184. GTP-binding positions include Asp-14–Thr-19 and Asn-131–Asp-134.

The protein belongs to the TRAFAC class translation factor GTPase superfamily. Classic translation factor GTPase family. LepA subfamily.

It is found in the cell membrane. The catalysed reaction is GTP + H2O = GDP + phosphate + H(+). Required for accurate and efficient protein synthesis under certain stress conditions. May act as a fidelity factor of the translation reaction, by catalyzing a one-codon backward translocation of tRNAs on improperly translocated ribosomes. Back-translocation proceeds from a post-translocation (POST) complex to a pre-translocation (PRE) complex, thus giving elongation factor G a second chance to translocate the tRNAs correctly. Binds to ribosomes in a GTP-dependent manner. This Wolbachia sp. subsp. Drosophila simulans (strain wRi) protein is Elongation factor 4.